The chain runs to 282 residues: Bifunctional protein FolD (282 aa).

NADP(+)-binding positions include 165-167 (GRS), S190, and T231.

The protein belongs to the tetrahydrofolate dehydrogenase/cyclohydrolase family. Homodimer.

It carries out the reaction (6R)-5,10-methylene-5,6,7,8-tetrahydrofolate + NADP(+) = (6R)-5,10-methenyltetrahydrofolate + NADPH. It catalyses the reaction (6R)-5,10-methenyltetrahydrofolate + H2O = (6R)-10-formyltetrahydrofolate + H(+). It participates in one-carbon metabolism; tetrahydrofolate interconversion. In terms of biological role, catalyzes the oxidation of 5,10-methylenetetrahydrofolate to 5,10-methenyltetrahydrofolate and then the hydrolysis of 5,10-methenyltetrahydrofolate to 10-formyltetrahydrofolate. This is Bifunctional protein FolD from Clostridium botulinum (strain Alaska E43 / Type E3).